A 573-amino-acid polypeptide reads, in one-letter code: Urease subunit alpha (573 aa).

The Urease domain maps to 136-573 (GAIDCHVHLI…LPMAQRYFLF (438 aa)). Positions 141, 143, and 224 each coordinate Ni(2+). Lys-224 carries the post-translational modification N6-carboxylysine. His-226 contacts substrate. Residues His-253 and His-279 each coordinate Ni(2+). The Proton donor role is filled by His-327. A Ni(2+)-binding site is contributed by Asp-367.

The protein belongs to the metallo-dependent hydrolases superfamily. Urease alpha subunit family. Heterotrimer of UreA (gamma), UreB (beta) and UreC (alpha) subunits. Three heterotrimers associate to form the active enzyme. The cofactor is Ni cation. Post-translationally, carboxylation allows a single lysine to coordinate two nickel ions.

Its subcellular location is the cytoplasm. It carries out the reaction urea + 2 H2O + H(+) = hydrogencarbonate + 2 NH4(+). It functions in the pathway nitrogen metabolism; urea degradation; CO(2) and NH(3) from urea (urease route): step 1/1. In Mycobacterium sp. (strain JLS), this protein is Urease subunit alpha.